Reading from the N-terminus, the 371-residue chain is Queuine tRNA-ribosyltransferase (371 aa).

Asp-93 serves as the catalytic Proton acceptor. Substrate is bound by residues 93–97 (DSGGF), Asp-147, Gln-191, and Gly-218. The segment at 249–255 (GVGTPLD) is RNA binding. Residue Asp-268 is the Nucleophile of the active site. The tract at residues 273-277 (TRNAR) is RNA binding; important for wobble base 34 recognition. 4 residues coordinate Zn(2+): Cys-306, Cys-308, Cys-311, and His-337.

This sequence belongs to the queuine tRNA-ribosyltransferase family. Homodimer. Within each dimer, one monomer is responsible for RNA recognition and catalysis, while the other monomer binds to the replacement base PreQ1. Zn(2+) serves as cofactor.

It carries out the reaction 7-aminomethyl-7-carbaguanine + guanosine(34) in tRNA = 7-aminomethyl-7-carbaguanosine(34) in tRNA + guanine. It participates in tRNA modification; tRNA-queuosine biosynthesis. In terms of biological role, catalyzes the base-exchange of a guanine (G) residue with the queuine precursor 7-aminomethyl-7-deazaguanine (PreQ1) at position 34 (anticodon wobble position) in tRNAs with GU(N) anticodons (tRNA-Asp, -Asn, -His and -Tyr). Catalysis occurs through a double-displacement mechanism. The nucleophile active site attacks the C1' of nucleotide 34 to detach the guanine base from the RNA, forming a covalent enzyme-RNA intermediate. The proton acceptor active site deprotonates the incoming PreQ1, allowing a nucleophilic attack on the C1' of the ribose to form the product. After dissociation, two additional enzymatic reactions on the tRNA convert PreQ1 to queuine (Q), resulting in the hypermodified nucleoside queuosine (7-(((4,5-cis-dihydroxy-2-cyclopenten-1-yl)amino)methyl)-7-deazaguanosine). The protein is Queuine tRNA-ribosyltransferase of Lawsonia intracellularis (strain PHE/MN1-00).